The primary structure comprises 214 residues: Thymidylate kinase (214 aa).

ATP is bound at residue 10–17 (GPDGAGKT).

The protein belongs to the thymidylate kinase family.

It carries out the reaction dTMP + ATP = dTDP + ADP. Its function is as follows. Phosphorylation of dTMP to form dTDP in both de novo and salvage pathways of dTTP synthesis. The polypeptide is Thymidylate kinase (Levilactobacillus brevis (strain ATCC 367 / BCRC 12310 / CIP 105137 / JCM 1170 / LMG 11437 / NCIMB 947 / NCTC 947) (Lactobacillus brevis)).